Here is a 249-residue protein sequence, read N- to C-terminus: Tetraspanin-18 (249 aa).

Residues 1 to 13 (MEGDCLSCMKYLM) are Cytoplasmic-facing. The helical transmembrane segment at 14-34 (FVFNFFIFLGGACLLGIGIWV) threads the bilayer. Residues 35 to 49 (MVDPTGFREIVAANP) are Extracellular-facing. Residues 50-70 (LLITGAYILLAMGGLLFLLGF) traverse the membrane as a helical segment. At 71–83 (LGCCGAVRENKCL) the chain is on the cytoplasmic side. Residues 84–104 (LLFFFLFILIIFLAELSAAIL) form a helical membrane-spanning segment. Topologically, residues 105 to 223 (AFIFRGNLTR…AFETYVYLAG (119 aa)) are extracellular. N111 and N129 each carry an N-linked (GlcNAc...) asparagine glycan. A helical transmembrane segment spans residues 224-244 (ALAIGVLAIELFAMIFAMCLF). Residues 245 to 249 (RGIIQ) are Cytoplasmic-facing.

This sequence belongs to the tetraspanin (TM4SF) family. As to quaternary structure, interacts with ORAI1; this interaction regulates ORAI1 exit from the endoplasmic (ER), and/or Golgi, and trafficking to the cell surface.

It is found in the membrane. Plays a role in the cell surface localization of ORAI1 and may participate in the regulation of Ca(2+) signaling and the VWF release in response to inflammatory stimuli. The sequence is that of Tetraspanin-18 from Bos taurus (Bovine).